A 275-amino-acid chain; its full sequence is Ribosomal RNA small subunit methyltransferase A (275 aa).

S-adenosyl-L-methionine is bound by residues asparagine 21, leucine 23, glycine 48, glutamate 69, aspartate 94, and asparagine 115.

This sequence belongs to the class I-like SAM-binding methyltransferase superfamily. rRNA adenine N(6)-methyltransferase family. RsmA subfamily.

It is found in the cytoplasm. It carries out the reaction adenosine(1518)/adenosine(1519) in 16S rRNA + 4 S-adenosyl-L-methionine = N(6)-dimethyladenosine(1518)/N(6)-dimethyladenosine(1519) in 16S rRNA + 4 S-adenosyl-L-homocysteine + 4 H(+). Functionally, specifically dimethylates two adjacent adenosines (A1518 and A1519) in the loop of a conserved hairpin near the 3'-end of 16S rRNA in the 30S particle. May play a critical role in biogenesis of 30S subunits. This chain is Ribosomal RNA small subunit methyltransferase A, found in Clostridium botulinum (strain Kyoto / Type A2).